The primary structure comprises 445 residues: Phosphoglucosamine mutase (445 aa).

Ser-99 functions as the Phosphoserine intermediate in the catalytic mechanism. 4 residues coordinate Mg(2+): Ser-99, Asp-242, Asp-244, and Asp-246. Phosphoserine is present on Ser-99.

Belongs to the phosphohexose mutase family. Mg(2+) is required as a cofactor. Post-translationally, activated by phosphorylation.

The catalysed reaction is alpha-D-glucosamine 1-phosphate = D-glucosamine 6-phosphate. Its function is as follows. Catalyzes the conversion of glucosamine-6-phosphate to glucosamine-1-phosphate. The protein is Phosphoglucosamine mutase of Campylobacter jejuni subsp. jejuni serotype O:23/36 (strain 81-176).